The sequence spans 1360 residues: KN motif and ankyrin repeat domains 1 (1360 aa).

Residues 30–68 (PYFVETPYGFQLDLDFVKYVDDIQKGNTIKKLNIQKRRK) are KN motif; Interaction with TLN1. Positions 41–44 (LDLD) match the Important for binding to TLN1 motif. Residues 43–52 (LDFVKYVDDI) carry the Nuclear export signal 1 (NES 1) motif. The Nuclear localization signal 1 (NLS 1) signature appears at 65–68 (KRRK). The segment at 66–103 (RRKPSVPCPEVRAIPGHQGVWTSTESLSSSNSDDSKQC) is disordered. Residues 88-103 (STESLSSSNSDDSKQC) show a composition bias toward low complexity. The Nuclear export signal 2 (NES 2) signature appears at 125–134 (LETSPTFAVS). Ser-186 is modified (phosphoserine). The segment at 221 to 253 (DYNSYVPAAPTTSSMGSSVRHSPLSSGISTPVT) is disordered. Polar residues predominate over residues 230 to 253 (PTTSSMGSSVRHSPLSSGISTPVT). An interaction with PPFIBP1 region spans residues 244 to 339 (LSSGISTPVT…SQLELLARAR (96 aa)). Residues 260–311 (LQHIREQMAIALKRLKELEEQVRTIPVLQVKISVLQEEKRQLASQLKSQRAS) adopt a coiled-coil conformation. Ser-325 carries the phosphoserine modification. Coiled-coil stretches lie at residues 367–394 (FRQL…ELRE) and 453–487 (ITEA…TTHD). A Nuclear export signal 3 (NES 3) motif is present at residues 618–627 (LTLLKTNLNL). Disordered regions lie at residues 929–954 (SQPE…MQGS) and 983–1053 (IMKK…DTRG). Basic and acidic residues-rich tracts occupy residues 938–947 (AEGKHSRGHE) and 985–995 (KKSDGNKDSNG). Residues 985 to 998 (KKSDGNKDSNGAKK) carry the Nuclear localization signal 2 (NLS 2) motif. Residues 1010–1025 (ETTSSDESSSDGSSSS) are compositionally biased toward low complexity. The segment covering 1026–1047 (ESDDECDTIGYPPEEEEEEEEK) has biased composition (acidic residues). The tract at residues 1081-1360 (EPEKEEIRER…PGPTHRGSFD (280 aa)) is interaction with KIF21A. An ANK 0; degenerate repeat occupies 1117–1154 (KDMRICLNTLQHDWFRVSSQKSAVPAMVGDYIAAFEAV). ANK repeat units lie at residues 1169–1199 (NGNT…NVDH), 1203–1236 (AGYT…DVNA), 1241–1270 (AGQT…DVNI), 1274–1306 (EGST…HLED), and 1308–1337 (DGST…FSKA). A disordered region spans residues 1337–1360 (AQSPSTPRLGRKTSPGPTHRGSFD).

In terms of assembly, part of a cortical microtubule stabilization complex (CMSC) composed of KANK1, PPFIA1, PPFIBP1, ERC1/ELKS, PHLDB2/LL5beta, CLASPs, KIF21A and possibly additional interactors; within CMSCs KANK1 and PHLDB2/LL5beta appear to be the core components for targeting of microtubule-binding proteins KIF21A and CLASPs, whereas PPFIA1, PPFIBP1 and ERC1/ELKS serve as scaffolds for protein clustering. Interacts (via KN motif) with TLN1 (via R7 domain); this mediates CMSC clustering around focal adhesions. Interacts (via CC1 domain, residues 244-339) with PPFIBP1. Interacts (via ANK repeats 1-5) with KIF21A (via residues 1142-1169). Interacts with YWHAQ; the interaction requires KANK1 phosphorylation at Ser-325 and is enhanced by growth factor stimulation. Interacts with YWHAB, YWHAG, YWHAE, YWHAH, YWHAZ and SFN; the interaction requires KANK1 phosphorylation at Ser-325. Interacts with ARFGEF1; however, colocalization cannot be experimentally confirmed. Interacts with BAIAP2. Interacts with CTNNB1. Interacts (via coiled coil domain) with DAAM1 (via coiled coil domain).

It is found in the cytoplasm. Its subcellular location is the cell cortex. The protein localises to the cell projection. The protein resides in the ruffle membrane. It localises to the nucleus. Adapter protein that links structural and signaling protein complexes positioned to guide microtubule and actin cytoskeleton dynamics during cell morphogenesis. At focal adhesions (FAs) rims, organizes cortical microtubule stabilizing complexes (CMSCs) and directly interacts with major FA component TLN1, forming macromolecular assemblies positioned to control microtubule-actin crosstalk at the cell edge. Recruits KIF21A in CMSCs at axonal growth cones and regulates axon guidance by suppressing microtubule growth without inducing microtubule disassembly once it reaches the cell cortex. Interacts with ARFGEF1 and participates in establishing microtubule-organizing center (MTOC) orientation and directed cell movement in wound healing. Regulates actin stress fiber formation and cell migration by inhibiting RHOA activation in response to growth factors; this function involves phosphorylation through PI3K/Akt signaling and may depend on the competitive interaction with 14-3-3 adapter proteins to sequester them from active complexes. Inhibits the formation of lamellipodia but not of filopodia; this function may depend on the competitive interaction with BAIAP2 to block its association with activated RAC1. Inhibits fibronectin-mediated cell spreading; this function is partially mediated by BAIAP2. In the nucleus, is involved in beta-catenin-dependent activation of transcription. During cell division, may regulate DAAM1-dependent RHOA activation that signals centrosome maturation and chromosomal segregation. May also be involved in contractile ring formation during cytokinesis. Potential tumor suppressor for renal cell carcinoma. The chain is KN motif and ankyrin repeat domains 1 from Mus musculus (Mouse).